The chain runs to 493 residues: Probable malate:quinone oxidoreductase (493 aa).

The protein belongs to the MQO family. FAD is required as a cofactor.

The enzyme catalyses (S)-malate + a quinone = a quinol + oxaloacetate. It participates in carbohydrate metabolism; tricarboxylic acid cycle; oxaloacetate from (S)-malate (quinone route): step 1/1. The polypeptide is Probable malate:quinone oxidoreductase (Mycobacterium tuberculosis (strain ATCC 25177 / H37Ra)).